The following is a 241-amino-acid chain: MSQVKYKRIILKISGEALAGDKGNGINPTVIGHLAKEIKSVYDLCVGIGIVCGGGNMWRGETGAKLGMERAQADYMGMLATIMNGLALQDGLEKVGVPTRMQTSIEMRQIAEPYIRRRALRHLEKGRVVIFGGGTGNPYFSTDTTAALRAAEIGADVILMAKNGVDGVYSADPKTDPTATKFTELTQLDLISKNLKVMDRTASSLSMDTEIPLIVFNVNTPGNIKKVVVGENIGTVIRGDK.

12 to 15 (KISG) contributes to the ATP binding site. The tract at residues 20 to 25 (GDKGNG) is involved in allosteric activation by GTP. G54 serves as a coordination point for UMP. ATP-binding residues include G55 and R59. UMP contacts are provided by residues D74 and 135–142 (TGNPYFST). Residues N163, Y169, and D172 each contribute to the ATP site.

The protein belongs to the UMP kinase family. Homohexamer.

Its subcellular location is the cytoplasm. It catalyses the reaction UMP + ATP = UDP + ADP. It participates in pyrimidine metabolism; CTP biosynthesis via de novo pathway; UDP from UMP (UMPK route): step 1/1. Allosterically activated by GTP. Inhibited by UTP. In terms of biological role, catalyzes the reversible phosphorylation of UMP to UDP. The chain is Uridylate kinase from Lactobacillus helveticus (strain DPC 4571).